Here is a 588-residue protein sequence, read N- to C-terminus: Sulfite reductase [NADPH] hemoprotein beta-component (588 aa).

Positions 442, 448, 487, and 491 each coordinate [4Fe-4S] cluster. Cys-491 is a siroheme binding site.

The protein belongs to the nitrite and sulfite reductase 4Fe-4S domain family. Alpha(8)-beta(8). The alpha component is a flavoprotein, the beta component is a hemoprotein. The cofactor is siroheme. It depends on [4Fe-4S] cluster as a cofactor.

It carries out the reaction hydrogen sulfide + 3 NADP(+) + 3 H2O = sulfite + 3 NADPH + 4 H(+). It participates in sulfur metabolism; hydrogen sulfide biosynthesis; hydrogen sulfide from sulfite (NADPH route): step 1/1. Its function is as follows. Component of the sulfite reductase complex that catalyzes the 6-electron reduction of sulfite to sulfide. This is one of several activities required for the biosynthesis of L-cysteine from sulfate. In Actinobacillus pleuropneumoniae serotype 5b (strain L20), this protein is Sulfite reductase [NADPH] hemoprotein beta-component.